A 269-amino-acid polypeptide reads, in one-letter code: tRNA pseudouridine synthase A (269 aa).

Aspartate 51 serves as the catalytic Nucleophile. Tyrosine 109 provides a ligand contact to substrate.

The protein belongs to the tRNA pseudouridine synthase TruA family. As to quaternary structure, homodimer.

The catalysed reaction is uridine(38/39/40) in tRNA = pseudouridine(38/39/40) in tRNA. Formation of pseudouridine at positions 38, 39 and 40 in the anticodon stem and loop of transfer RNAs. The protein is tRNA pseudouridine synthase A of Histophilus somni (strain 129Pt) (Haemophilus somnus).